A 918-amino-acid chain; its full sequence is Isoleucine--tRNA ligase (918 aa).

The 'HIGH' region signature appears at 57–67; sequence PYANGDIHIGH. Glu-568 is an L-isoleucyl-5'-AMP binding site. The short motif at 609 to 613 is the 'KMSKS' region element; that stretch reads KMSKS. Lys-612 contacts ATP. Zn(2+)-binding residues include Cys-894, Cys-897, Cys-909, and Cys-912.

Belongs to the class-I aminoacyl-tRNA synthetase family. IleS type 1 subfamily. In terms of assembly, monomer. Zn(2+) is required as a cofactor.

The protein resides in the cytoplasm. The enzyme catalyses tRNA(Ile) + L-isoleucine + ATP = L-isoleucyl-tRNA(Ile) + AMP + diphosphate. Its function is as follows. Catalyzes the attachment of isoleucine to tRNA(Ile). As IleRS can inadvertently accommodate and process structurally similar amino acids such as valine, to avoid such errors it has two additional distinct tRNA(Ile)-dependent editing activities. One activity is designated as 'pretransfer' editing and involves the hydrolysis of activated Val-AMP. The other activity is designated 'posttransfer' editing and involves deacylation of mischarged Val-tRNA(Ile). The polypeptide is Isoleucine--tRNA ligase (Sulfurovum sp. (strain NBC37-1)).